A 492-amino-acid chain; its full sequence is Acetyl-coenzyme A carboxylase carboxyl transferase subunit beta, chloroplastic (492 aa).

Residues 198–219 are disordered; sequence STNGSDLTISESSNESESSNES. The region spanning 228–492 is the CoA carboxyltransferase N-terminal domain; that stretch reads LWVQCENCYG…FHGRFPLNQN (265 aa). Zn(2+) is bound by residues Cys232, Cys235, Cys251, and Cys254. The segment at 232–254 adopts a C4-type zinc-finger fold; it reads CENCYGLNYKKFLKSKMYLCEQC.

The protein belongs to the AccD/PCCB family. In terms of assembly, acetyl-CoA carboxylase is a heterohexamer composed of biotin carboxyl carrier protein, biotin carboxylase and 2 subunits each of ACCase subunit alpha and ACCase plastid-coded subunit beta (accD). The cofactor is Zn(2+).

The protein localises to the plastid. Its subcellular location is the chloroplast stroma. It catalyses the reaction N(6)-carboxybiotinyl-L-lysyl-[protein] + acetyl-CoA = N(6)-biotinyl-L-lysyl-[protein] + malonyl-CoA. It participates in lipid metabolism; malonyl-CoA biosynthesis; malonyl-CoA from acetyl-CoA: step 1/1. In terms of biological role, component of the acetyl coenzyme A carboxylase (ACC) complex. Biotin carboxylase (BC) catalyzes the carboxylation of biotin on its carrier protein (BCCP) and then the CO(2) group is transferred by the transcarboxylase to acetyl-CoA to form malonyl-CoA. This chain is Acetyl-coenzyme A carboxylase carboxyl transferase subunit beta, chloroplastic, found in Citrus sinensis (Sweet orange).